Reading from the N-terminus, the 361-residue chain is Single-stranded DNA-binding protein 3 (361 aa).

Met1 is subject to N-acetylmethionine. Positions 16–48 (AREKLALYVYEYLLHVGAQKSAQTFLSEIRWEK) constitute a LisH domain. Asymmetric dimethylarginine occurs at positions 128, 134, and 138. Disordered stretches follow at residues 140-166 (GNQPPGGVPGTQPLMPNSMDPTRQQGH) and 184-361 (PMGP…TMSV). Residues 223-241 (PNSANSIPYSSSSPGTYVG) show a composition bias toward low complexity. Pro residues predominate over residues 245–255 (GGGPPGTPIMP). Polar residues predominate over residues 258–269 (ADSTNSSDNIYT). Residues 288-298 (GSDGPMGGMGG) show a composition bias toward gly residues. The segment covering 319–330 (NSPNNISGISNP) has biased composition (low complexity). Phosphoserine is present on residues Ser320, Ser325, and Ser328. Thr333 is modified (phosphothreonine). Residues 346 to 361 (HSFQNDNYSPSMTMSV) are compositionally biased toward polar residues. Phosphoserine occurs at positions 354 and 360.

The protein resides in the nucleus. In terms of biological role, may be involved in transcription regulation of the alpha 2(I) collagen gene where it binds to the single-stranded polypyrimidine sequences in the promoter region. The chain is Single-stranded DNA-binding protein 3 (Ssbp3) from Rattus norvegicus (Rat).